The following is a 307-amino-acid chain: Quinolinate synthase (307 aa).

Iminosuccinate-binding residues include His20 and Ser37. Position 82 (Cys82) interacts with [4Fe-4S] cluster. Residues 108-110 and Ser125 each bind iminosuccinate; that span reads YIN. Cys168 is a [4Fe-4S] cluster binding site. Iminosuccinate contacts are provided by residues 194–196 and Thr219; that span reads HPE. Cys264 is a [4Fe-4S] cluster binding site.

It belongs to the quinolinate synthase family. Type 2 subfamily. Requires [4Fe-4S] cluster as cofactor.

The protein resides in the cytoplasm. The enzyme catalyses iminosuccinate + dihydroxyacetone phosphate = quinolinate + phosphate + 2 H2O + H(+). The protein operates within cofactor biosynthesis; NAD(+) biosynthesis; quinolinate from iminoaspartate: step 1/1. Catalyzes the condensation of iminoaspartate with dihydroxyacetone phosphate to form quinolinate. The sequence is that of Quinolinate synthase from Pyrobaculum aerophilum (strain ATCC 51768 / DSM 7523 / JCM 9630 / CIP 104966 / NBRC 100827 / IM2).